Reading from the N-terminus, the 508-residue chain is Flavonoid 3',5'-hydroxylase 2 (508 aa).

Residue Cys-443 coordinates heme.

Belongs to the cytochrome P450 family. Heme serves as cofactor. In terms of tissue distribution, flowers.

It is found in the microsome. The protein resides in the endoplasmic reticulum. The enzyme catalyses a 3',5'-unsubstituted flavanone + 2 reduced [NADPH--hemoprotein reductase] + 2 O2 = a 3',5'-dihydroxyflavanone + 2 oxidized [NADPH--hemoprotein reductase] + 2 H2O + 2 H(+). The protein operates within pigment biosynthesis; anthocyanin biosynthesis. Catalyzes the 3'5'-hydroxylation of naringenin and eriodictyol to form 5,7,3,'4',5'-pentahydroxyflavanone and 3',5'-hydroxylation of dihydrokaempferol and dihydroquercetin to form dihydromyricetin. The polypeptide is Flavonoid 3',5'-hydroxylase 2 (CYP75A3) (Petunia hybrida (Petunia)).